Here is a 378-residue protein sequence, read N- to C-terminus: UPF0754 membrane protein Bcer98_0694 (378 aa).

A helical transmembrane segment spans residues 358-378; sequence LGALLGGTIGLMQGILLLFLM.

It belongs to the UPF0754 family.

The protein resides in the cell membrane. In Bacillus cytotoxicus (strain DSM 22905 / CIP 110041 / 391-98 / NVH 391-98), this protein is UPF0754 membrane protein Bcer98_0694.